We begin with the raw amino-acid sequence, 247 residues long: tRNA (guanine-N(7)-)-methyltransferase (247 aa).

S-adenosyl-L-methionine is bound by residues glycine 70, 93–94 (EI), 128–129 (NA), and leucine 148. Aspartate 151 is an active-site residue. 226-228 (SEE) is a binding site for S-adenosyl-L-methionine.

It belongs to the class I-like SAM-binding methyltransferase superfamily. TrmB family.

Its subcellular location is the nucleus. The catalysed reaction is guanosine(46) in tRNA + S-adenosyl-L-methionine = N(7)-methylguanosine(46) in tRNA + S-adenosyl-L-homocysteine. It participates in tRNA modification; N(7)-methylguanine-tRNA biosynthesis. Its function is as follows. Catalyzes the formation of N(7)-methylguanine at position 46 (m7G46) in tRNA. This Drosophila pseudoobscura pseudoobscura (Fruit fly) protein is tRNA (guanine-N(7)-)-methyltransferase.